Reading from the N-terminus, the 162-residue chain is uncharacterized protein (162 aa).

3 Pentapeptide repeat domains span residues 33–72 (ASLI…NMTE), 73–112 (VCLI…DLRK), and 113–152 (ANLS…YISD).

This is an uncharacterized protein from Synechocystis sp. (strain ATCC 27184 / PCC 6803 / Kazusa).